The chain runs to 526 residues: GMP synthase [glutamine-hydrolyzing] (526 aa).

Residues 9 to 208 (RILILDFGSQ…LVNICGCKQL (200 aa)) form the Glutamine amidotransferase type-1 domain. Cys86 (nucleophile) is an active-site residue. Residues His182 and Glu184 contribute to the active site. Positions 209–401 (WTPGRIIEDA…LGLPYDMVYR (193 aa)) constitute a GMPS ATP-PPase domain. Residue 236–242 (SGGVDSS) coordinates ATP.

As to quaternary structure, homodimer.

The enzyme catalyses XMP + L-glutamine + ATP + H2O = GMP + L-glutamate + AMP + diphosphate + 2 H(+). It functions in the pathway purine metabolism; GMP biosynthesis; GMP from XMP (L-Gln route): step 1/1. Its function is as follows. Catalyzes the synthesis of GMP from XMP. This chain is GMP synthase [glutamine-hydrolyzing], found in Hahella chejuensis (strain KCTC 2396).